The chain runs to 146 residues: Hemoglobin subunit beta (146 aa).

Residue Val1 is modified to N-acetylvaline. Residues 2 to 146 (HLTPEEKALV…VANALAHKYH (145 aa)) enclose the Globin domain. N6-acetyllysine is present on Lys59. His63 is a heme b binding site. N6-acetyllysine is present on Lys82. His92 lines the heme b pocket. The residue at position 93 (Cys93) is an S-nitrosocysteine. Lys144 is modified (N6-acetyllysine).

This sequence belongs to the globin family. Heterotetramer of two alpha chains and two beta chains. Red blood cells.

Functionally, involved in oxygen transport from the lung to the various peripheral tissues. The protein is Hemoglobin subunit beta (HBB) of Trichechus inunguis (Amazon manatee).